A 126-amino-acid polypeptide reads, in one-letter code: UPF0292 protein TSIB_0423 (126 aa).

The Toprim domain maps to 20–100 (NGVILVEGMR…RVDTNTRREL (81 aa)). Residues Glu26, Asp69, and Asp71 each coordinate Mg(2+).

This sequence belongs to the UPF0292 family. It depends on Mg(2+) as a cofactor.

The polypeptide is UPF0292 protein TSIB_0423 (Thermococcus sibiricus (strain DSM 12597 / MM 739)).